Here is a 203-residue protein sequence, read N- to C-terminus: Small ribosomal subunit protein uS4 (203 aa).

One can recognise an S4 RNA-binding domain in the interval 93-156; the sequence is RRLDNVVYRL…MKVPAILEAV (64 aa).

It belongs to the universal ribosomal protein uS4 family. As to quaternary structure, part of the 30S ribosomal subunit. Contacts protein S5. The interaction surface between S4 and S5 is involved in control of translational fidelity.

In terms of biological role, one of the primary rRNA binding proteins, it binds directly to 16S rRNA where it nucleates assembly of the body of the 30S subunit. With S5 and S12 plays an important role in translational accuracy. The polypeptide is Small ribosomal subunit protein uS4 (Streptococcus uberis (strain ATCC BAA-854 / 0140J)).